The chain runs to 343 residues: 3-isopropylmalate dehydrogenase (343 aa).

Positions 94, 104, 128, and 218 each coordinate substrate. Mg(2+)-binding residues include aspartate 218, aspartate 242, and aspartate 246. Position 278–290 (278–290 (GSAPDIAGQNKAN)) interacts with NAD(+).

Belongs to the isocitrate and isopropylmalate dehydrogenases family. LeuB type 2 subfamily. As to quaternary structure, homodimer. Requires Mg(2+) as cofactor. Mn(2+) is required as a cofactor.

The protein localises to the cytoplasm. The catalysed reaction is (2R,3S)-3-isopropylmalate + NAD(+) = 4-methyl-2-oxopentanoate + CO2 + NADH. It participates in amino-acid biosynthesis; L-leucine biosynthesis; L-leucine from 3-methyl-2-oxobutanoate: step 3/4. Catalyzes the oxidation of 3-carboxy-2-hydroxy-4-methylpentanoate (3-isopropylmalate) to 3-carboxy-4-methyl-2-oxopentanoate. The product decarboxylates to 4-methyl-2 oxopentanoate. The protein is 3-isopropylmalate dehydrogenase of Bifidobacterium longum subsp. infantis (strain ATCC 15697 / DSM 20088 / JCM 1222 / NCTC 11817 / S12).